Here is a 520-residue protein sequence, read N- to C-terminus: Hydroxymethylglutaryl-CoA synthase, cytoplasmic (520 aa).

Ser-4 carries the phosphoserine modification. The (3S)-3-hydroxy-3-methylglutaryl-CoA site is built by Asp-43 and Ala-44. 44 to 46 contributes to the CoA binding site; the sequence is AGK. Lys-46 is subject to N6-acetyllysine. Glu-95 functions as the Proton donor/acceptor in the catalytic mechanism. Cys-129, Asn-167, Thr-171, Ser-221, and His-264 together coordinate (3S)-3-hydroxy-3-methylglutaryl-CoA. The active-site Acyl-thioester intermediate is Cys-129. Asn-167 serves as a coordination point for CoA. Residue Ser-221 participates in CoA binding. His-264 functions as the Proton donor/acceptor in the catalytic mechanism. The CoA site is built by Lys-269 and Lys-273. Lys-273, Asn-343, and Ser-377 together coordinate (3S)-3-hydroxy-3-methylglutaryl-CoA. The residue at position 273 (Lys-273) is an N6-acetyllysine. The disordered stretch occupies residues 487–520; that stretch reads NTATEHIPSPAKKVPRLPATSGEPESAVISNGEH. A phosphoserine mark is found at Ser-495 and Ser-516.

This sequence belongs to the thiolase-like superfamily. HMG-CoA synthase family. In terms of assembly, homodimer.

It is found in the cytoplasm. The enzyme catalyses acetoacetyl-CoA + acetyl-CoA + H2O = (3S)-3-hydroxy-3-methylglutaryl-CoA + CoA + H(+). It participates in metabolic intermediate biosynthesis; (R)-mevalonate biosynthesis; (R)-mevalonate from acetyl-CoA: step 2/3. In terms of biological role, catalyzes the condensation of acetyl-CoA with acetoacetyl-CoA to form HMG-CoA, which is converted by HMG-CoA reductase (HMGCR) into mevalonate, a precursor for cholesterol synthesis. This Rattus norvegicus (Rat) protein is Hydroxymethylglutaryl-CoA synthase, cytoplasmic.